Consider the following 185-residue polypeptide: Proton-translocating ferredoxin:NAD(+) oxidoreductase complex subunit G (185 aa).

The chain crosses the membrane as a helical span at residues 14–34 (TKNLTITCFISGIIIAAVYYI). Position 161 is an FMN phosphoryl threonine (threonine 161).

This sequence belongs to the RnfG family. As to quaternary structure, the complex is composed of six subunits: RnfA, RnfB, RnfC, RnfD, RnfE and RnfG. FMN is required as a cofactor.

It localises to the cell membrane. In terms of biological role, part of a membrane-bound complex that couples electron transfer with translocation of ions across the membrane. Couples electron transfer from reduced ferredoxin to NAD(+) with translocation of H(+) out of the cell. Essential for energy conservation during autotrophic growth. Contributes to ATP synthesis during heterotrophic growth. This chain is Proton-translocating ferredoxin:NAD(+) oxidoreductase complex subunit G, found in Clostridium ljungdahlii (strain ATCC 55383 / DSM 13528 / PETC).